The primary structure comprises 71 residues: uncharacterized protein (71 aa).

Residues 12–34 traverse the membrane as a helical segment; the sequence is GYLSLTLVTLPVCSSLHCYFLWT.

The protein resides in the membrane. This is an uncharacterized protein from Dictyostelium discoideum (Social amoeba).